The primary structure comprises 349 residues: MKKTPLYEAHLRLGARMVDFAGYLLPLQYTSIVEEHLAVRRAVGVFDVSHMGEFLVRGEEALAFLQWATANDAGKLKVGRAQYSMLPNERGGVVDDIYLYRLGEEEYLMVVNAANIAKDLAHLQALAKGFRVELEDASERTALLALQGPKAQALLQGLVDVDLSTKRKNDVFPARVAGRPARLARTGYTGEDGFELFLAPEDAEPVFLALVEAGAKPAGLGARDSLRLEAGFPLYGHELTEETNPLCTPWAWVVKKEKAFLGKEAMLAQACRERLVGLVLEGGIPREGYRVLSGGCPVGRVTSGGYSPLLQRGIALAYVEEGAEGPFQVEVRGRAVPAALSPLPFVPLK.

Belongs to the GcvT family. In terms of assembly, the glycine cleavage system is composed of four proteins: P, T, L and H.

It catalyses the reaction N(6)-[(R)-S(8)-aminomethyldihydrolipoyl]-L-lysyl-[protein] + (6S)-5,6,7,8-tetrahydrofolate = N(6)-[(R)-dihydrolipoyl]-L-lysyl-[protein] + (6R)-5,10-methylene-5,6,7,8-tetrahydrofolate + NH4(+). Functionally, the glycine cleavage system catalyzes the degradation of glycine. In Thermus thermophilus (strain ATCC BAA-163 / DSM 7039 / HB27), this protein is Aminomethyltransferase.